The following is a 186-amino-acid chain: Lipid A palmitoyltransferase PagP (186 aa).

An N-terminal signal peptide occupies residues 1 to 25 (MNVSKYVAIFSFVFIQLISVGKVFA). Residues histidine 58, aspartate 101, and serine 102 contribute to the active site.

It belongs to the lipid A palmitoyltransferase family. In terms of assembly, homodimer.

Its subcellular location is the cell outer membrane. It catalyses the reaction lipid A (E. coli) + a 1-hexadecanoyl-2-acyl-sn-glycero-3-phosphocholine = hepta-acyl lipid A (E. coli) + a 2-acyl-sn-glycero-3-phosphocholine. The enzyme catalyses lipid IIA + a 1-hexadecanoyl-2-acyl-sn-glycero-3-phosphocholine = lipid IIB + a 2-acyl-sn-glycero-3-phosphocholine. It carries out the reaction lipid IVA (E. coli) + a 1-hexadecanoyl-2-acyl-sn-glycero-3-phosphocholine = lipid IVB (E. coli) + a 2-acyl-sn-glycero-3-phosphocholine. Its function is as follows. Transfers a palmitate residue from the sn-1 position of a phospholipid to the N-linked hydroxymyristate on the proximal unit of lipid A or its precursors. The sequence is that of Lipid A palmitoyltransferase PagP from Escherichia coli (strain ATCC 55124 / KO11FL).